We begin with the raw amino-acid sequence, 99 residues long: Cell division protein FtsB (99 aa).

The Cytoplasmic segment spans residues 1-3 (MKF). Residues 4–21 (FVITLIVLLGLLQYRLWS) traverse the membrane as a helical segment. The Periplasmic portion of the chain corresponds to 22–99 (GDNSLPEYFV…GDRAVSSPSQ (78 aa)). Residues 31–73 (VLQKQIAAQQDGNAKLNERNQVLKEEIIDLKSGTEAIEERARN) are a coiled coil.

It belongs to the FtsB family. As to quaternary structure, part of a complex composed of FtsB, FtsL and FtsQ.

It is found in the cell inner membrane. Its function is as follows. Essential cell division protein. May link together the upstream cell division proteins, which are predominantly cytoplasmic, with the downstream cell division proteins, which are predominantly periplasmic. The sequence is that of Cell division protein FtsB from Shewanella oneidensis (strain ATCC 700550 / JCM 31522 / CIP 106686 / LMG 19005 / NCIMB 14063 / MR-1).